The sequence spans 705 residues: Polyribonucleotide nucleotidyltransferase (705 aa).

Mg(2+) is bound by residues aspartate 486 and aspartate 492. The KH domain maps to 553-612 (PRIHTMKVSQDKIRDIIGKGGATIRQLTEETGTTIEIEDDGTVKIAATSGEQAEDAINRI). In terms of domain architecture, S1 motif spans 622-690 (GTLYTGKVVR…RQGRVRLSIK (69 aa)).

This sequence belongs to the polyribonucleotide nucleotidyltransferase family. Component of the RNA degradosome, which is a multiprotein complex involved in RNA processing and mRNA degradation. Mg(2+) serves as cofactor.

It is found in the cytoplasm. The catalysed reaction is RNA(n+1) + phosphate = RNA(n) + a ribonucleoside 5'-diphosphate. In terms of biological role, involved in mRNA degradation. Catalyzes the phosphorolysis of single-stranded polyribonucleotides processively in the 3'- to 5'-direction. The polypeptide is Polyribonucleotide nucleotidyltransferase (Colwellia psychrerythraea (strain 34H / ATCC BAA-681) (Vibrio psychroerythus)).